The primary structure comprises 261 residues: Cytochrome c oxidase subunit 3 (261 aa).

Residues 1–15 (MTHQTHAYHMVNPSP) are Mitochondrial matrix-facing. The chain crosses the membrane as a helical span at residues 16–34 (WPLTGALSALLMTSGLAMW). Topologically, residues 35-40 (FHYNSM) are mitochondrial intermembrane. The chain crosses the membrane as a helical span at residues 41-66 (LLLTLGLMTNLLTMYQWWRDIVREST). At 67–72 (FQGHHT) the chain is on the mitochondrial matrix side. A helical transmembrane segment spans residues 73–105 (LVVQKGLRYGMILFIISEVFFFSGFFWAFYHSS). Over 106–128 (LAPTPELGGCWPPTGIHPLNPME) the chain is Mitochondrial intermembrane. A helical membrane pass occupies residues 129–152 (VPLLNTSVLLASGVSITWAHHSLM). Topologically, residues 153–155 (EGN) are mitochondrial matrix. Residues 156–183 (RKHMLQALFITISLGVYFTLLQASEYYE) form a helical membrane-spanning segment. Residues 184–190 (APFTISD) lie on the Mitochondrial intermembrane side of the membrane. Residues 191–223 (GIYGSTFFVATGFHGLHVIIGSTFLIVCFLRQL) form a helical membrane-spanning segment. Over 224–232 (KFHFTSNHH) the chain is Mitochondrial matrix. A helical transmembrane segment spans residues 233 to 256 (FGFEAAAWYWHFVDVVWLFLYVSI). The Mitochondrial intermembrane segment spans residues 257–261 (YWWGS).

It belongs to the cytochrome c oxidase subunit 3 family. In terms of assembly, component of the cytochrome c oxidase (complex IV, CIV), a multisubunit enzyme composed of 14 subunits. The complex is composed of a catalytic core of 3 subunits MT-CO1, MT-CO2 and MT-CO3, encoded in the mitochondrial DNA, and 11 supernumerary subunits COX4I, COX5A, COX5B, COX6A, COX6B, COX6C, COX7A, COX7B, COX7C, COX8 and NDUFA4, which are encoded in the nuclear genome. The complex exists as a monomer or a dimer and forms supercomplexes (SCs) in the inner mitochondrial membrane with NADH-ubiquinone oxidoreductase (complex I, CI) and ubiquinol-cytochrome c oxidoreductase (cytochrome b-c1 complex, complex III, CIII), resulting in different assemblies (supercomplex SCI(1)III(2)IV(1) and megacomplex MCI(2)III(2)IV(2)).

The protein localises to the mitochondrion inner membrane. The enzyme catalyses 4 Fe(II)-[cytochrome c] + O2 + 8 H(+)(in) = 4 Fe(III)-[cytochrome c] + 2 H2O + 4 H(+)(out). Component of the cytochrome c oxidase, the last enzyme in the mitochondrial electron transport chain which drives oxidative phosphorylation. The respiratory chain contains 3 multisubunit complexes succinate dehydrogenase (complex II, CII), ubiquinol-cytochrome c oxidoreductase (cytochrome b-c1 complex, complex III, CIII) and cytochrome c oxidase (complex IV, CIV), that cooperate to transfer electrons derived from NADH and succinate to molecular oxygen, creating an electrochemical gradient over the inner membrane that drives transmembrane transport and the ATP synthase. Cytochrome c oxidase is the component of the respiratory chain that catalyzes the reduction of oxygen to water. Electrons originating from reduced cytochrome c in the intermembrane space (IMS) are transferred via the dinuclear copper A center (CU(A)) of subunit 2 and heme A of subunit 1 to the active site in subunit 1, a binuclear center (BNC) formed by heme A3 and copper B (CU(B)). The BNC reduces molecular oxygen to 2 water molecules using 4 electrons from cytochrome c in the IMS and 4 protons from the mitochondrial matrix. The chain is Cytochrome c oxidase subunit 3 (MT-CO3) from Ceratotherium simum (White rhinoceros).